The following is a 393-amino-acid chain: NAD(P)H-quinone oxidoreductase subunit H, chloroplastic (393 aa).

This sequence belongs to the complex I 49 kDa subunit family. NDH is composed of at least 16 different subunits, 5 of which are encoded in the nucleus.

The protein resides in the plastid. Its subcellular location is the chloroplast thylakoid membrane. It catalyses the reaction a plastoquinone + NADH + (n+1) H(+)(in) = a plastoquinol + NAD(+) + n H(+)(out). It carries out the reaction a plastoquinone + NADPH + (n+1) H(+)(in) = a plastoquinol + NADP(+) + n H(+)(out). NDH shuttles electrons from NAD(P)H:plastoquinone, via FMN and iron-sulfur (Fe-S) centers, to quinones in the photosynthetic chain and possibly in a chloroplast respiratory chain. The immediate electron acceptor for the enzyme in this species is believed to be plastoquinone. Couples the redox reaction to proton translocation, and thus conserves the redox energy in a proton gradient. This chain is NAD(P)H-quinone oxidoreductase subunit H, chloroplastic, found in Ranunculus macranthus (Large buttercup).